Reading from the N-terminus, the 172-residue chain is UPF0102 protein Pcryo_2198 (172 aa).

The protein belongs to the UPF0102 family.

This is UPF0102 protein Pcryo_2198 from Psychrobacter cryohalolentis (strain ATCC BAA-1226 / DSM 17306 / VKM B-2378 / K5).